Reading from the N-terminus, the 34-residue chain is Ribonuclease PL1 (34 aa).

Asn4 carries N-linked (GlcNAc...) asparagine; partial glycosylation. The active-site Proton acceptor is the His15.

Belongs to the pancreatic ribonuclease family.

Its subcellular location is the lysosome. It catalyses the reaction an [RNA] containing cytidine + H2O = an [RNA]-3'-cytidine-3'-phosphate + a 5'-hydroxy-ribonucleotide-3'-[RNA].. It carries out the reaction an [RNA] containing uridine + H2O = an [RNA]-3'-uridine-3'-phosphate + a 5'-hydroxy-ribonucleotide-3'-[RNA].. This Sus scrofa (Pig) protein is Ribonuclease PL1.